Here is a 352-residue protein sequence, read N- to C-terminus: Organic solute transporter subunit alpha (352 aa).

The Extracellular segment spans residues 1-45 (MDVAHPEEVTRFSPDILMEKFNVSEACFLPPPISIQLILQLTWLD). The N-linked (GlcNAc...) asparagine glycan is linked to Asn-22. A helical membrane pass occupies residues 46–66 (IGVFAALTAMTVLTIAIYLEI). The Cytoplasmic segment spans residues 67 to 82 (VCYLMDKVKCPIKRKT). The chain crosses the membrane as a helical span at residues 83-103 (LMWNSAAPTVIAITSCLGLWV). Residues 104 to 108 (PRAIM) are Extracellular-facing. Residues 109-129 (FVDMAAAMYFGVGFYLMLLII) form a helical membrane-spanning segment. The Cytoplasmic segment spans residues 130 to 173 (VQGYGGEEAMLQHLATHTIRISTGPCCCCCPCLPHIHLTRQKYK). The helical transmembrane segment at 174–194 (IFVLGAFQVAFLRPALFLLGV) threads the bilayer. Topologically, residues 195-210 (VLWTNGLYDPDDWSST) are extracellular. A helical membrane pass occupies residues 211-231 (SIFLWLNLFLGVSTILGLWPV). Residues 232–250 (NVLFRHSKVLMADQKLTCK) are Cytoplasmic-facing. A helical transmembrane segment spans residues 251 to 271 (FALFQAILILSSLQNSIIGTL). Residues 272–294 (AGAGHIGCAPPYSARTRGQQMNN) are Extracellular-facing. Residues 295 to 312 (QLLIIEMFFVGILTRISY) traverse the membrane as a helical segment. The Cytoplasmic segment spans residues 313–352 (RKRDDRPGHRHVGEVQQIVRECDQPAIADQQADHSSISHI).

It belongs to the OST-alpha family. Interacts with slc51b. The Ost-alpha/Ost-beta complex is a heterodimer composed of alpha (slc51a) and beta (slc51b) subunit. In terms of tissue distribution, expressed in liver.

The protein localises to the cell membrane. The protein resides in the endoplasmic reticulum membrane. It carries out the reaction taurocholate(out) = taurocholate(in). The enzyme catalyses prostaglandin E2(out) = prostaglandin E2(in). It catalyses the reaction estrone 3-sulfate(out) = estrone 3-sulfate(in). The catalysed reaction is dehydroepiandrosterone 3-sulfate(out) = dehydroepiandrosterone 3-sulfate(in). It carries out the reaction tauroursodeoxycholate(out) = tauroursodeoxycholate(in). The enzyme catalyses glycoursodeoxycholate(out) = glycoursodeoxycholate(in). It catalyses the reaction glycocholate(out) = glycocholate(in). The catalysed reaction is taurochenodeoxycholate(out) = taurochenodeoxycholate(in). It carries out the reaction glycochenodeoxycholate(out) = glycochenodeoxycholate(in). The enzyme catalyses taurodeoxycholate(out) = taurodeoxycholate(in). It catalyses the reaction glycodeoxycholate(out) = glycodeoxycholate(in). Functionally, essential component of the Ost-alpha/Ost-beta complex, a heterodimer that acts as the intestinal basolateral transporter responsible for the translocation of bile acids (such as taurocholate), steroids (such as estrone sulfate), and eicosanoids (such as prostaglandin E2). In Leucoraja erinaceus (Little skate), this protein is Organic solute transporter subunit alpha (slc51a).